Here is a 262-residue protein sequence, read N- to C-terminus: Ornithine carbamoyltransferase (262 aa).

Carbamoyl phosphate-binding positions include 3–7, glutamine 30, arginine 54, and 81–84; these read STRTR and HPTQ. Residues asparagine 114, aspartate 178, and 182–183 each bind L-ornithine; that span reads SM. Residues 219–222 and threonine 247 each bind carbamoyl phosphate; that span reads HCLP.

The protein belongs to the aspartate/ornithine carbamoyltransferase superfamily. OTCase family.

It localises to the cytoplasm. The catalysed reaction is carbamoyl phosphate + L-ornithine = L-citrulline + phosphate + H(+). Its pathway is amino-acid biosynthesis; L-arginine biosynthesis; L-arginine from L-ornithine and carbamoyl phosphate: step 1/3. It participates in amino-acid degradation; L-arginine degradation via ADI pathway; carbamoyl phosphate from L-arginine: step 2/2. Its function is as follows. Reversibly catalyzes the transfer of the carbamoyl group from carbamoyl phosphate (CP) to the N(epsilon) atom of ornithine (ORN) to produce L-citrulline. The sequence is that of Ornithine carbamoyltransferase (argF) from Neisseria meningitidis.